We begin with the raw amino-acid sequence, 153 residues long: Deoxyuridine 5'-triphosphate nucleotidohydrolase (153 aa).

Residues 71–73, asparagine 84, 88–90, and methionine 98 each bind substrate; these read RSG and LID.

Belongs to the dUTPase family. It depends on Mg(2+) as a cofactor.

It catalyses the reaction dUTP + H2O = dUMP + diphosphate + H(+). It participates in pyrimidine metabolism; dUMP biosynthesis; dUMP from dCTP (dUTP route): step 2/2. In terms of biological role, this enzyme is involved in nucleotide metabolism: it produces dUMP, the immediate precursor of thymidine nucleotides and it decreases the intracellular concentration of dUTP so that uracil cannot be incorporated into DNA. The sequence is that of Deoxyuridine 5'-triphosphate nucleotidohydrolase from Wigglesworthia glossinidia brevipalpis.